The chain runs to 237 residues: MSLLHQARFFITVNHLRDLPATAVPEVAFAGRSNAGKSTAINILCNQKRLAFSSRTPGRTQHINYFSVAPVKAPDPLAFLVDLPGYGYAEVSGSAKYHWQGLLSDYVQTRQQLAGLILMMDARRPFTDLDCQMVEWFLPTGRPIHVLLTKADKLTNSENAKALRETRKMLQGYAEQLETPVPMTAQLFSSLKRRGIEEAQAVIAGWLNLPEARKAEREPAAANSVPPAVPPASDPAA.

Residues 23–209 enclose the EngB-type G domain; it reads AVPEVAFAGR…QAVIAGWLNL (187 aa). GTP-binding positions include 31–38, 58–62, 82–85, 149–152, and 187–190; these read GRSNAGKS, GRTQH, DLPG, TKAD, and LFSS. Mg(2+) contacts are provided by Ser38 and Thr60. The tract at residues 214 to 237 is disordered; sequence KAEREPAAANSVPPAVPPASDPAA. A compositionally biased stretch (pro residues) spans 227 to 237; sequence PAVPPASDPAA.

The protein belongs to the TRAFAC class TrmE-Era-EngA-EngB-Septin-like GTPase superfamily. EngB GTPase family. The cofactor is Mg(2+).

In terms of biological role, necessary for normal cell division and for the maintenance of normal septation. The sequence is that of Probable GTP-binding protein EngB from Cupriavidus taiwanensis (strain DSM 17343 / BCRC 17206 / CCUG 44338 / CIP 107171 / LMG 19424 / R1) (Ralstonia taiwanensis (strain LMG 19424)).